Consider the following 399-residue polypeptide: CCA-adding enzyme (399 aa).

The ATP site is built by glycine 32 and arginine 35. CTP-binding residues include glycine 32 and arginine 35. 2 residues coordinate Mg(2+): aspartate 45 and aspartate 47. Residues arginine 116, aspartate 159, arginine 162, arginine 165, and arginine 168 each coordinate ATP. Positions 116, 159, 162, 165, and 168 each coordinate CTP.

It belongs to the tRNA nucleotidyltransferase/poly(A) polymerase family. Bacterial CCA-adding enzyme type 3 subfamily. Homodimer. Mg(2+) serves as cofactor.

The enzyme catalyses a tRNA precursor + 2 CTP + ATP = a tRNA with a 3' CCA end + 3 diphosphate. It carries out the reaction a tRNA with a 3' CCA end + 2 CTP + ATP = a tRNA with a 3' CCACCA end + 3 diphosphate. Its function is as follows. Catalyzes the addition and repair of the essential 3'-terminal CCA sequence in tRNAs without using a nucleic acid template. Adds these three nucleotides in the order of C, C, and A to the tRNA nucleotide-73, using CTP and ATP as substrates and producing inorganic pyrophosphate. tRNA 3'-terminal CCA addition is required both for tRNA processing and repair. Also involved in tRNA surveillance by mediating tandem CCA addition to generate a CCACCA at the 3' terminus of unstable tRNAs. While stable tRNAs receive only 3'-terminal CCA, unstable tRNAs are marked with CCACCA and rapidly degraded. The protein is CCA-adding enzyme of Streptococcus gordonii (strain Challis / ATCC 35105 / BCRC 15272 / CH1 / DL1 / V288).